The chain runs to 556 residues: Innexin-7 (556 aa).

3 helical membrane-spanning segments follow: residues 21 to 41, 127 to 147, and 213 to 233; these read LVAS…AVLI, FFLL…KYFA, and AYYV…NVIL. N-linked (GlcNAc...) asparagine glycosylation is present at asparagine 267. The helical transmembrane segment at 310-330 threads the bilayer; it reads IFVFLWAWYILLTAFTVGNLF. A disordered region spans residues 431 to 556; it reads DESQVESGKN…IPKTAEKKHW (126 aa). Positions 435-447 are enriched in polar residues; the sequence is VESGKNTAPSTSH. Residues 452-461 show a composition bias toward basic and acidic residues; it reads RGTEQLEKNV. Positions 463–474 are enriched in polar residues; that stretch reads SRQGSLSTQLRP. A compositionally biased stretch (basic residues) spans 500–513; sequence KGSKKPSPTKKKAS. Residues 514–527 show a composition bias toward low complexity; the sequence is SKNSPQSSSNSRRP. The segment covering 539 to 556 has biased composition (basic and acidic residues); the sequence is HHHEPDSKIPKTAEKKHW.

This sequence belongs to the pannexin family.

Its subcellular location is the cell membrane. It is found in the cell junction. It localises to the gap junction. Structural component of the gap junctions. The chain is Innexin-7 (inx-7) from Caenorhabditis elegans.